The sequence spans 252 residues: NADH-quinone oxidoreductase subunit E (252 aa).

Residues cysteine 114, cysteine 119, cysteine 155, and cysteine 159 each coordinate [2Fe-2S] cluster. The segment at 211-252 is disordered; the sequence is LAGLPDQRPDEGQGGPGAPTLAGLQVARKNDMQAPPTPGADE.

The protein belongs to the complex I 24 kDa subunit family. The cofactor is [2Fe-2S] cluster.

The enzyme catalyses a quinone + NADH + 5 H(+)(in) = a quinol + NAD(+) + 4 H(+)(out). NDH-1 shuttles electrons from NADH, via FMN and iron-sulfur (Fe-S) centers, to quinones in the respiratory chain. The immediate electron acceptor for the enzyme in this species is believed to be menaquinone. Couples the redox reaction to proton translocation (for every two electrons transferred, four hydrogen ions are translocated across the cytoplasmic membrane), and thus conserves the redox energy in a proton gradient. This chain is NADH-quinone oxidoreductase subunit E (nuoE), found in Mycobacterium bovis (strain ATCC BAA-935 / AF2122/97).